A 218-amino-acid polypeptide reads, in one-letter code: Imidazole glycerol phosphate synthase subunit HisH (218 aa).

The region spanning 1–213 is the Glutamine amidotransferase type-1 domain; it reads MTTIIDYGIG…AALPTTEEAG (213 aa). The active-site Nucleophile is cysteine 79. Catalysis depends on residues histidine 188 and glutamate 190.

As to quaternary structure, heterodimer of HisH and HisF.

It localises to the cytoplasm. It carries out the reaction 5-[(5-phospho-1-deoxy-D-ribulos-1-ylimino)methylamino]-1-(5-phospho-beta-D-ribosyl)imidazole-4-carboxamide + L-glutamine = D-erythro-1-(imidazol-4-yl)glycerol 3-phosphate + 5-amino-1-(5-phospho-beta-D-ribosyl)imidazole-4-carboxamide + L-glutamate + H(+). The enzyme catalyses L-glutamine + H2O = L-glutamate + NH4(+). It participates in amino-acid biosynthesis; L-histidine biosynthesis; L-histidine from 5-phospho-alpha-D-ribose 1-diphosphate: step 5/9. Its function is as follows. IGPS catalyzes the conversion of PRFAR and glutamine to IGP, AICAR and glutamate. The HisH subunit catalyzes the hydrolysis of glutamine to glutamate and ammonia as part of the synthesis of IGP and AICAR. The resulting ammonia molecule is channeled to the active site of HisF. The protein is Imidazole glycerol phosphate synthase subunit HisH of Salinibacter ruber (strain DSM 13855 / M31).